Here is a 92-residue protein sequence, read N- to C-terminus: Acylphosphatase (92 aa).

An intrachain disulfide couples cysteine 5 to cysteine 49. An Acylphosphatase-like domain is found at 5–92 (CIIAWVYGRV…SGELTDFRIR (88 aa)). Catalysis depends on residues arginine 20 and asparagine 38.

This sequence belongs to the acylphosphatase family.

The enzyme catalyses an acyl phosphate + H2O = a carboxylate + phosphate + H(+). The sequence is that of Acylphosphatase from Escherichia coli O6:H1 (strain CFT073 / ATCC 700928 / UPEC).